Reading from the N-terminus, the 318-residue chain is NADH-ubiquinone oxidoreductase chain 1 (318 aa).

A run of 8 helical transmembrane segments spans residues 2-22 (FMIN…FLTL), 70-90 (MFII…SPLP), 100-120 (LGVL…LWSG), 136-156 (VAQT…VLLM), 172-192 (LWLL…TLAE), 222-242 (LFFL…AILF), 253-273 (ELYT…FLWI), and 294-314 (LPLT…TASI).

The protein belongs to the complex I subunit 1 family. Core subunit of respiratory chain NADH dehydrogenase (Complex I) which is composed of 45 different subunits.

It localises to the mitochondrion inner membrane. The catalysed reaction is a ubiquinone + NADH + 5 H(+)(in) = a ubiquinol + NAD(+) + 4 H(+)(out). Functionally, core subunit of the mitochondrial membrane respiratory chain NADH dehydrogenase (Complex I) which catalyzes electron transfer from NADH through the respiratory chain, using ubiquinone as an electron acceptor. Essential for the catalytic activity and assembly of complex I. This is NADH-ubiquinone oxidoreductase chain 1 (MT-ND1) from Balaenoptera musculus (Blue whale).